The chain runs to 195 residues: FMN-dependent NADH:quinone oxidoreductase (195 aa).

FMN is bound by residues S10, 16-18, 91-94, and 135-138; these read SQS, MYNF, and TRGG.

It belongs to the azoreductase type 1 family. In terms of assembly, homodimer. It depends on FMN as a cofactor.

It carries out the reaction 2 a quinone + NADH + H(+) = 2 a 1,4-benzosemiquinone + NAD(+). The catalysed reaction is N,N-dimethyl-1,4-phenylenediamine + anthranilate + 2 NAD(+) = 2-(4-dimethylaminophenyl)diazenylbenzoate + 2 NADH + 2 H(+). Quinone reductase that provides resistance to thiol-specific stress caused by electrophilic quinones. Functionally, also exhibits azoreductase activity. Catalyzes the reductive cleavage of the azo bond in aromatic azo compounds to the corresponding amines. The chain is FMN-dependent NADH:quinone oxidoreductase from Vibrio vulnificus (strain YJ016).